A 329-amino-acid polypeptide reads, in one-letter code: Glyceraldehyde-3-phosphate dehydrogenase 1 (329 aa).

NAD(+)-binding positions include 11–12 (RI), Asp-33, and Lys-78. Residues 148-150 (SCT), Thr-179, 208-209 (TG), and Arg-231 each bind D-glyceraldehyde 3-phosphate. Cys-149 acts as the Nucleophile in catalysis. Asn-313 contributes to the NAD(+) binding site.

Belongs to the glyceraldehyde-3-phosphate dehydrogenase family. In terms of assembly, homotetramer.

The protein resides in the cytoplasm. It catalyses the reaction D-glyceraldehyde 3-phosphate + phosphate + NAD(+) = (2R)-3-phospho-glyceroyl phosphate + NADH + H(+). It functions in the pathway carbohydrate degradation; glycolysis; pyruvate from D-glyceraldehyde 3-phosphate: step 1/5. The chain is Glyceraldehyde-3-phosphate dehydrogenase 1 (GAP1) from Kluyveromyces lactis (strain ATCC 8585 / CBS 2359 / DSM 70799 / NBRC 1267 / NRRL Y-1140 / WM37) (Yeast).